The chain runs to 755 residues: MCKDSACFSTMKETDLEAVATAVQRVAGMLQRPDQLDKVEQYRRREARKKASVEARLKAAIQSQLDGVRTGLSQLHNALNDVKDIQQSLADVSKDWRQSINTIESLKDVKDAVVQHSQLAAAVENLKNIFSVPEIVRETQDLIEQGALLQAHRKLMDLECSRDGLMCEQYRMDSGNKRDMTLIHGYFGSTQGLSDELAKQLWMVLQRSLVTVRRDPTLLVSVVRIIEREEKIDRRILDRKKQTGFVPPGRPKNWKEKMFAVLDRTVTTRIEGTQADTRESDKMWLVRHLEIIRKYVLDDLVIAKNLLVQCFPPHYDIFKNLLSMYHQALSIRMQDLASEDLEANEIVSLLTWVLNTYTSAEMMGNVELAPEVDVNALEPLLSPNVVSELLDTYMSTLTSNIIAWLRKALETDKKDWSKETEPEADQDGYYQTTLPAIVFQMFEQNLQVAAQISEDLKTKVLVLCLQQMNSFLSRYKEEAQLYKEEHLRNRQHPHCYVQYMVAIINNCQTFKESIISLKRKYLKPETEESLCQSQPSMDGILDAIAKEGCSSLLEEVFLDLEQHLNELMTKKWMLGSNAVDIICVTVEDYFNDFAKIKKPYKKRMTAEAHRRVVVEYLRAVMQKRISFRSAEERKEGAEKMVREAEQLRFLFRKLASGFGEDADGHCDTIVAVAEVIKLTDPSLLYLEVSTLVSKYPDIRDDHIGALLALRGDASRDMKQTIMETLEQGPMQASPNYVPIFQEIVVPSLNVAKLLK.

Coiled-coil stretches lie at residues 34–62 and 618–649; these read DQLD…AAIQ and RAVM…QLRF. The residue at position 38 (K38) is an N6-acetyllysine.

The protein belongs to the SEC6 family. As to quaternary structure, the exocyst complex is composed of EXOC1, EXOC2, EXOC3, EXOC4, EXOC5, EXOC6, EXOC7 and EXOC8. Interacts with EXOC3L1. Interacts with BIRC6/bruce. Interacts with MYRIP. Interacts with SLC6A9. In terms of tissue distribution, widely expressed, with highest levels in kidney, followed by brain (at protein level).

Its subcellular location is the cytoplasm. It is found in the perinuclear region. The protein localises to the cell projection. The protein resides in the growth cone. It localises to the neuron projection. Its subcellular location is the midbody. It is found in the golgi apparatus. Functionally, component of the exocyst complex involved in the docking of exocytic vesicles with fusion sites on the plasma membrane. The chain is Exocyst complex component 3 (Exoc3) from Rattus norvegicus (Rat).